The sequence spans 417 residues: Tyrosine--tRNA ligase (417 aa).

Tyr36 is a binding site for L-tyrosine. The short motif at Pro41 to His50 is the 'HIGH' region element. L-tyrosine contacts are provided by Tyr170 and Gln174. Residues Lys231–Ser235 carry the 'KMSKS' region motif. An ATP-binding site is contributed by Lys234. Residues Thr351–His417 form the S4 RNA-binding domain.

This sequence belongs to the class-I aminoacyl-tRNA synthetase family. TyrS type 1 subfamily. As to quaternary structure, homodimer.

The protein localises to the cytoplasm. It carries out the reaction tRNA(Tyr) + L-tyrosine + ATP = L-tyrosyl-tRNA(Tyr) + AMP + diphosphate + H(+). Its function is as follows. Catalyzes the attachment of tyrosine to tRNA(Tyr) in a two-step reaction: tyrosine is first activated by ATP to form Tyr-AMP and then transferred to the acceptor end of tRNA(Tyr). This is Tyrosine--tRNA ligase from Macrococcus caseolyticus (strain JCSC5402) (Macrococcoides caseolyticum).